The sequence spans 496 residues: Chromosomal replication initiator protein DnaA (496 aa).

A domain I, interacts with DnaA modulators region spans residues 1–76 (MKMDSAVSEE…TELWQEENPQ (76 aa)). Residues 76–150 (QILKVEVVVR…AAATGAVLGS (75 aa)) are domain II. Residues 151-373 (PLDPRYTFDT…GAFNQLLFRQ (223 aa)) form a domain III, AAA+ region region. ATP is bound by residues glycine 197, glycine 199, lysine 200, and threonine 201. The segment at 374-496 (SFEPNISIDR…LKRLINDQAA (123 aa)) is domain IV, binds dsDNA.

It belongs to the DnaA family. As to quaternary structure, oligomerizes as a right-handed, spiral filament on DNA at oriC.

It localises to the cytoplasm. In terms of biological role, plays an essential role in the initiation and regulation of chromosomal replication. ATP-DnaA binds to the origin of replication (oriC) to initiate formation of the DNA replication initiation complex once per cell cycle. Binds the DnaA box (a 9 base pair repeat at the origin) and separates the double-stranded (ds)DNA. Forms a right-handed helical filament on oriC DNA; dsDNA binds to the exterior of the filament while single-stranded (ss)DNA is stabiized in the filament's interior. The ATP-DnaA-oriC complex binds and stabilizes one strand of the AT-rich DNA unwinding element (DUE), permitting loading of DNA polymerase. After initiation quickly degrades to an ADP-DnaA complex that is not apt for DNA replication. Binds acidic phospholipids. The sequence is that of Chromosomal replication initiator protein DnaA from Brucella abortus biovar 1 (strain 9-941).